Consider the following 233-residue polypeptide: Biosynthetic peptidoglycan transglycosylase (233 aa).

The chain crosses the membrane as a helical span at residues 8–28 (LIALPVGIFIFFNAYVYGNII).

It belongs to the glycosyltransferase 51 family.

Its subcellular location is the cell inner membrane. The enzyme catalyses [GlcNAc-(1-&gt;4)-Mur2Ac(oyl-L-Ala-gamma-D-Glu-L-Lys-D-Ala-D-Ala)](n)-di-trans,octa-cis-undecaprenyl diphosphate + beta-D-GlcNAc-(1-&gt;4)-Mur2Ac(oyl-L-Ala-gamma-D-Glu-L-Lys-D-Ala-D-Ala)-di-trans,octa-cis-undecaprenyl diphosphate = [GlcNAc-(1-&gt;4)-Mur2Ac(oyl-L-Ala-gamma-D-Glu-L-Lys-D-Ala-D-Ala)](n+1)-di-trans,octa-cis-undecaprenyl diphosphate + di-trans,octa-cis-undecaprenyl diphosphate + H(+). The protein operates within cell wall biogenesis; peptidoglycan biosynthesis. In terms of biological role, peptidoglycan polymerase that catalyzes glycan chain elongation from lipid-linked precursors. The chain is Biosynthetic peptidoglycan transglycosylase from Neisseria gonorrhoeae (strain NCCP11945).